The sequence spans 310 residues: Uridine phosphorylase 1 (310 aa).

Residues G60, R94, and 138 to 141 (RIGT) contribute to the phosphate site. Uridine is bound by residues 142-143 (SG) and 217-219 (QGR).

The protein belongs to the PNP/UDP phosphorylase family. Homodimer.

The enzyme catalyses uridine + phosphate = alpha-D-ribose 1-phosphate + uracil. It carries out the reaction 2'-deoxyuridine + phosphate = 2-deoxy-alpha-D-ribose 1-phosphate + uracil. It functions in the pathway pyrimidine metabolism; UMP biosynthesis via salvage pathway; uracil from uridine (phosphorylase route): step 1/1. Catalyzes the reversible phosphorylytic cleavage of uridine to uracil and ribose-1-phosphate which can then be utilized as carbon and energy sources or in the rescue of pyrimidine bases for nucleotide synthesis. Shows broad substrate specificity and can also accept deoxyuridine and other analogous compounds. The polypeptide is Uridine phosphorylase 1 (Homo sapiens (Human)).